A 124-amino-acid chain; its full sequence is MPTINQLIKKGRKSAAVKTKSPALQSCPQKRGVCTSVKTITPKKPNSALRKVARIRLSNGIEVTAYIPGIGHNLQEHSVVLVRGGRVKDLPGVRYHIIRGTKDALGVEDRKRGRSKYGAKRPKA.

3-methylthioaspartic acid is present on aspartate 89. The tract at residues 104–124 is disordered; it reads ALGVEDRKRGRSKYGAKRPKA. Over residues 112 to 124 the composition is skewed to basic residues; sequence RGRSKYGAKRPKA.

This sequence belongs to the universal ribosomal protein uS12 family. As to quaternary structure, part of the 30S ribosomal subunit. Contacts proteins S8 and S17. May interact with IF1 in the 30S initiation complex.

Its function is as follows. With S4 and S5 plays an important role in translational accuracy. Interacts with and stabilizes bases of the 16S rRNA that are involved in tRNA selection in the A site and with the mRNA backbone. Located at the interface of the 30S and 50S subunits, it traverses the body of the 30S subunit contacting proteins on the other side and probably holding the rRNA structure together. The combined cluster of proteins S8, S12 and S17 appears to hold together the shoulder and platform of the 30S subunit. The chain is Small ribosomal subunit protein uS12 from Treponema denticola (strain ATCC 35405 / DSM 14222 / CIP 103919 / JCM 8153 / KCTC 15104).